Here is a 339-residue protein sequence, read N- to C-terminus: Nucleoid-associated protein Asuc_0779 (339 aa).

This sequence belongs to the YejK family.

It is found in the cytoplasm. The protein localises to the nucleoid. This chain is Nucleoid-associated protein Asuc_0779, found in Actinobacillus succinogenes (strain ATCC 55618 / DSM 22257 / CCUG 43843 / 130Z).